Here is a 70-residue protein sequence, read N- to C-terminus: Conotoxin Lt3.4 (70 aa).

Positions 1 to 24 (MLKMGVLLFTFLVLFPLAMFQLDA) are cleaved as a signal peptide. Positions 25-54 (DQPVERYAENKQDLNRDERMKIMLSALRQR) are excised as a propeptide. Gln55 is subject to Pyrrolidone carboxylic acid. 3 disulfides stabilise this stretch: Cys56–Cys68, Cys57–Cys66, and Cys62–Cys69.

The protein belongs to the conotoxin M superfamily. As to expression, expressed by the venom duct.

The protein resides in the secreted. The chain is Conotoxin Lt3.4 from Conus litteratus (Lettered cone).